Consider the following 344-residue polypeptide: Succinylglutamate desuccinylase (344 aa).

Residues His-63, Glu-66, and His-160 each coordinate Zn(2+). Residue Glu-224 is part of the active site.

The protein belongs to the AspA/AstE family. Succinylglutamate desuccinylase subfamily. Requires Zn(2+) as cofactor.

It carries out the reaction N-succinyl-L-glutamate + H2O = L-glutamate + succinate. The protein operates within amino-acid degradation; L-arginine degradation via AST pathway; L-glutamate and succinate from L-arginine: step 5/5. Its function is as follows. Transforms N(2)-succinylglutamate into succinate and glutamate. In Shewanella sp. (strain MR-7), this protein is Succinylglutamate desuccinylase.